Reading from the N-terminus, the 157-residue chain is 3-hydroxybutyryl-CoA dehydratase (157 aa).

One can recognise a MaoC-like domain in the interval 22–120 (KKEISSSDVV…IPERRRARLA (99 aa)).

It catalyses the reaction (3R)-3-hydroxybutanoyl-CoA = (2E)-butenoyl-CoA + H2O. In terms of biological role, involved in the regeneration of glyoxylate from a molecule of acetyl-CoA. The polypeptide is 3-hydroxybutyryl-CoA dehydratase (Methylorubrum extorquens (strain ATCC 14718 / DSM 1338 / JCM 2805 / NCIMB 9133 / AM1) (Methylobacterium extorquens)).